We begin with the raw amino-acid sequence, 110 residues long: Coiled-coil-helix-coiled-coil-helix domain-containing protein 5 (110 aa).

Met1 is subject to N-acetylmethionine. 2 CHCH domains span residues 9-52 (ARYC…PIIR) and 55-97 (RQAC…QPPS). Short sequence motifs (cx9C motif) lie at residues 12–22 (CSRELDQYGQC), 34–44 (CHHLKMSIARC), 58–68 (CAEPFEAFEKC), and 79–89 (CAEHMRRFLQC). Intrachain disulfides connect Cys12–Cys44, Cys22–Cys34, Cys58–Cys89, and Cys68–Cys79.

As to quaternary structure, monomer.

Its subcellular location is the mitochondrion intermembrane space. In Mus musculus (Mouse), this protein is Coiled-coil-helix-coiled-coil-helix domain-containing protein 5 (Chchd5).